Here is a 793-residue protein sequence, read N- to C-terminus: Netrin-B (793 aa).

The first 22 residues, 1–22 (MVRATGTRMGLLLPIILALAIG), serve as a signal peptide directing secretion. The Laminin N-terminal domain occupies 39 to 303 (KPRKCLPSFV…NLQDNDSADA (265 aa)). N-linked (GlcNAc...) asparagine glycosylation is found at N103, N125, and N298. A disordered region spans residues 332-378 (SVVKRQGKHKGSAYEKHYQSKLAATTPPQQPPKVTPPGKVTPPSTAA). Positions 367-378 (PPGKVTPPSTAA) are enriched in low complexity. Intrachain disulfides connect C405/C414, C407/C461, C463/C472, C475/C495, C498/C507, C500/C525, C528/C537, C540/C558, C561/C573, C563/C580, C582/C591, C594/C608, C649/C738, C652/C740, and C665/C792. 3 consecutive Laminin EGF-like domains span residues 405-497 (CKCN…ECKM), 498-560 (CQCN…VCKR), and 561-610 (CDCH…PCIK). The interval 420–446 (SGSGTALSDQDDGQDEDTPSAPSLANH) is disordered. Residues 428-437 (DQDDGQDEDT) are compositionally biased toward acidic residues. Residues 649–792 (CGKCKASPKK…KRFQRRARKC (144 aa)) form the NTR domain. Residue N746 is glycosylated (N-linked (GlcNAc...) asparagine).

As to quaternary structure, binds to unc-5 and fra receptors. As to expression, at 24 hr after puparium formation (APF), detected in the most anterior (oldest) L3, L4 and L5 lamina neurons (at protein level). At 48 hr APF, expressed in all L3, L4 and L5 neurons with slightly higher expression in the L3 neurons (at protein level). At the midline of developing CNS and in different subsets of neurons, muscles, and epidermal patches.

It is found in the secreted. The protein resides in the extracellular space. It localises to the extracellular matrix. The protein localises to the cytoplasm. Its subcellular location is the perinuclear region. Its function is as follows. Netrins control guidance of CNS commissural axons and peripheral motor axons. Its association with either fra or unc-5 receptors will lead to axon attraction or repulsion, respectively. While short-range repulsion requires both fra and unc-5 receptors, long-range repulsion only requires unc-5. The sequence is that of Netrin-B (NetB) from Drosophila melanogaster (Fruit fly).